Here is a 222-residue protein sequence, read N- to C-terminus: Millepora cytotoxin-1 (222 aa).

Positions 1-20 are cleaved as a signal peptide; the sequence is MVTLYLHVPILLLVVITARA. Residues 21–75 constitute a propeptide that is removed on maturation; sequence APKPDTHNPFDELSSVAEKQDLHYGDRSRKDPFIAQNDVGNNFRDGTQENLTKVR. Cystine bridges form between C89-C115, C142-C168, and C179-C222. Repeats lie at residues 100-109, 153-162, and 206-215; these read SIHDNHYEDR, SIHDNYYEDR, and SQHNNYYEDR.

It belongs to the dermatopontin family. Post-translationally, is not glycosylated.

The protein resides in the secreted. It localises to the nematocyst. In terms of biological role, is potently cytotoxic (EC(50) value 79 ng/mL) towards L1210 mouse leukemia cells, has hemagglutination activity on sheep erythrocytes, and is lethal in crayfish. Has no phospholipase A2 activity. In Millepora dichotoma (Net fire coral), this protein is Millepora cytotoxin-1.